The sequence spans 258 residues: Protease HtpX homolog (258 aa).

A run of 2 helical transmembrane segments spans residues 24–44 (VLLF…LGLG) and 45–65 (GPLF…LISP). Position 146 (H146) interacts with Zn(2+). Residue E147 is part of the active site. A Zn(2+)-binding site is contributed by H150. The next 2 membrane-spanning stretches (helical) occupy residues 157–177 (IVMT…WSTV) and 186–206 (LVGI…LFIS). E210 is a binding site for Zn(2+).

The protein belongs to the peptidase M48B family. Zn(2+) is required as a cofactor.

The protein localises to the cell membrane. In Methanothermobacter thermautotrophicus (strain ATCC 29096 / DSM 1053 / JCM 10044 / NBRC 100330 / Delta H) (Methanobacterium thermoautotrophicum), this protein is Protease HtpX homolog.